The sequence spans 271 residues: Tryptophan synthase alpha chain (271 aa).

Catalysis depends on proton acceptor residues Glu-49 and Asp-60.

This sequence belongs to the TrpA family. In terms of assembly, tetramer of two alpha and two beta chains.

The enzyme catalyses (1S,2R)-1-C-(indol-3-yl)glycerol 3-phosphate + L-serine = D-glyceraldehyde 3-phosphate + L-tryptophan + H2O. It participates in amino-acid biosynthesis; L-tryptophan biosynthesis; L-tryptophan from chorismate: step 5/5. Functionally, the alpha subunit is responsible for the aldol cleavage of indoleglycerol phosphate to indole and glyceraldehyde 3-phosphate. This Paraburkholderia phymatum (strain DSM 17167 / CIP 108236 / LMG 21445 / STM815) (Burkholderia phymatum) protein is Tryptophan synthase alpha chain.